A 1076-amino-acid polypeptide reads, in one-letter code: JmjC domain-containing histone demethylation protein 1 (1076 aa).

Residues 93-265 (FSQTPLEDLV…TQLRVYQVEN (173 aa)) enclose the JmjC domain. A substrate-binding site is contributed by T159. Fe cation-binding residues include H162 and D164. K179 lines the substrate pocket. A Fe cation-binding site is contributed by H233. Disordered stretches follow at residues 598 to 748 (FEEE…DPVV) and 789 to 1056 (KIEP…KIPS). Residues 610-634 (DQEEEEYDAEEPEDQEEEEEDEYQA) show a composition bias toward acidic residues. A compositionally biased stretch (basic and acidic residues) spans 653 to 680 (AKNDESEEVSVKKDKKEKMEKVEKDEKR). A compositionally biased stretch (basic residues) spans 681–698 (RNSKSKKDKISKEKKKKE). Basic and acidic residues-rich tracts occupy residues 699-714 (RERI…ELRA) and 789-811 (KIEP…EPEH). Residues 935 to 946 (ASAPSSRHSSIS) are compositionally biased toward low complexity. Polar residues-rich tracts occupy residues 957 to 990 (FNSS…SINR) and 1004 to 1019 (DSLS…TYPT). A compositionally biased stretch (basic and acidic residues) spans 1044 to 1056 (QHHDDGHKHKIPS).

It belongs to the JHDM1 histone demethylase family. Fe(2+) is required as a cofactor.

It is found in the nucleus. The enzyme catalyses N(6),N(6)-dimethyl-L-lysyl(36)-[histone H3] + 2 2-oxoglutarate + 2 O2 = L-lysyl(36)-[histone H3] + 2 formaldehyde + 2 succinate + 2 CO2. Its function is as follows. Histone demethylase that specifically demethylates 'Lys-36' of histone H3, thereby playing a central role in histone code. Has a role in regulating lifespan. This Caenorhabditis elegans protein is JmjC domain-containing histone demethylation protein 1 (jhdm-1).